A 371-amino-acid polypeptide reads, in one-letter code: 4-hydroxy-3-methylbut-2-en-1-yl diphosphate synthase (flavodoxin) (371 aa).

Cys270, Cys273, Cys305, and Glu312 together coordinate [4Fe-4S] cluster.

Belongs to the IspG family. It depends on [4Fe-4S] cluster as a cofactor.

The catalysed reaction is (2E)-4-hydroxy-3-methylbut-2-enyl diphosphate + oxidized [flavodoxin] + H2O + 2 H(+) = 2-C-methyl-D-erythritol 2,4-cyclic diphosphate + reduced [flavodoxin]. Its pathway is isoprenoid biosynthesis; isopentenyl diphosphate biosynthesis via DXP pathway; isopentenyl diphosphate from 1-deoxy-D-xylulose 5-phosphate: step 5/6. Functionally, converts 2C-methyl-D-erythritol 2,4-cyclodiphosphate (ME-2,4cPP) into 1-hydroxy-2-methyl-2-(E)-butenyl 4-diphosphate. The sequence is that of 4-hydroxy-3-methylbut-2-en-1-yl diphosphate synthase (flavodoxin) from Psychrobacter arcticus (strain DSM 17307 / VKM B-2377 / 273-4).